The primary structure comprises 270 residues: Pyrroline-5-carboxylate reductase (270 aa).

This sequence belongs to the pyrroline-5-carboxylate reductase family.

It is found in the cytoplasm. It carries out the reaction L-proline + NADP(+) = (S)-1-pyrroline-5-carboxylate + NADPH + 2 H(+). The enzyme catalyses L-proline + NAD(+) = (S)-1-pyrroline-5-carboxylate + NADH + 2 H(+). The protein operates within amino-acid biosynthesis; L-proline biosynthesis; L-proline from L-glutamate 5-semialdehyde: step 1/1. Catalyzes the reduction of 1-pyrroline-5-carboxylate (PCA) to L-proline. This Corynebacterium melassecola protein is Pyrroline-5-carboxylate reductase.